The following is a 187-amino-acid chain: Elongation factor P (187 aa).

It belongs to the elongation factor P family.

The protein localises to the cytoplasm. It functions in the pathway protein biosynthesis; polypeptide chain elongation. In terms of biological role, involved in peptide bond synthesis. Stimulates efficient translation and peptide-bond synthesis on native or reconstituted 70S ribosomes in vitro. Probably functions indirectly by altering the affinity of the ribosome for aminoacyl-tRNA, thus increasing their reactivity as acceptors for peptidyl transferase. The chain is Elongation factor P from Roseiflexus sp. (strain RS-1).